The chain runs to 37 residues: Cytochrome b6-f complex subunit 5 (37 aa).

A helical transmembrane segment spans residues 5–25 (LLSGIVLGLIPITLFGLLVAA).

The protein belongs to the PetG family. As to quaternary structure, the 4 large subunits of the cytochrome b6-f complex are cytochrome b6, subunit IV (17 kDa polypeptide, PetD), cytochrome f and the Rieske protein, while the 4 small subunits are PetG, PetL, PetM and PetN. The complex functions as a dimer.

Its subcellular location is the plastid. It localises to the chloroplast thylakoid membrane. Component of the cytochrome b6-f complex, which mediates electron transfer between photosystem II (PSII) and photosystem I (PSI), cyclic electron flow around PSI, and state transitions. PetG is required for either the stability or assembly of the cytochrome b6-f complex. The protein is Cytochrome b6-f complex subunit 5 of Pyropia yezoensis (Susabi-nori).